Consider the following 342-residue polypeptide: Lipase B (342 aa).

The N-terminal stretch at 1 to 18 (MKLLSLTGVAGVLATCVA) is a signal peptide. Residues 19-25 (ATPLVKR) constitute a propeptide that is removed on maturation. Cys-47 and Cys-89 are disulfide-bonded. Asn-99 is a glycosylation site (N-linked (GlcNAc...) asparagine). Residues Ser-130, Asp-212, and His-249 contribute to the active site. Disulfide bonds link Cys-241-Cys-283 and Cys-318-Cys-336.

The enzyme catalyses a triacylglycerol + H2O = a diacylglycerol + a fatty acid + H(+). Hydrolysis of triglycerides. Is very stereospecific both in hydrolysis and in organic synthesis and has a potentially important application in glucolipid synthesis. This is Lipase B from Pseudozyma antarctica (Yeast).